The chain runs to 75 residues: Small ribosomal subunit protein bS18c (75 aa).

It belongs to the bacterial ribosomal protein bS18 family. As to quaternary structure, part of the 30S ribosomal subunit.

It localises to the plastid. Its subcellular location is the chloroplast. The sequence is that of Small ribosomal subunit protein bS18c (rps18) from Marchantia polymorpha (Common liverwort).